The primary structure comprises 218 residues: rRNA methyltransferase 2, mitochondrial (218 aa).

S-adenosyl-L-methionine contacts are provided by residues 59–62 (PGSW), Asp-80, 96–97 (DI), and Asp-133. The Proton acceptor role is filled by Lys-173.

Belongs to the class I-like SAM-binding methyltransferase superfamily. RNA methyltransferase RlmE family.

The protein localises to the mitochondrion. The catalysed reaction is a uridine in 21S rRNA + S-adenosyl-L-methionine = a 2'-O-methyluridine in 21S rRNA + S-adenosyl-L-homocysteine + H(+). S-adenosyl-L-methionine-dependent 2'-O-ribose methyltransferase that catalyzes the formation of the 2'-O-methyluridine corresponding to position 2791 in S.cerevisiae 21S mitochondrial large subunit ribosomal RNA (mtLSU rRNA), a universally conserved modification in the peptidyl transferase domain of the mtLSU rRNA. The polypeptide is rRNA methyltransferase 2, mitochondrial (Schizosaccharomyces pombe (strain 972 / ATCC 24843) (Fission yeast)).